A 301-amino-acid polypeptide reads, in one-letter code: Protoheme IX farnesyltransferase (301 aa).

The next 9 membrane-spanning stretches (helical) occupy residues 20 to 42, 55 to 75, 105 to 125, 126 to 146, 150 to 172, 176 to 198, 227 to 247, 249 to 269, and 280 to 300; these read FTEL…GMWL, VDVI…SGAF, ALMV…MTTW, QAGV…SLYA, LVSN…WFAV, FSIV…FYAI, MFFW…LGIV, VILA…GFKM, and FVYS…ISIF.

It belongs to the UbiA prenyltransferase family. Protoheme IX farnesyltransferase subfamily. Interacts with CtaA.

Its subcellular location is the cell membrane. The enzyme catalyses heme b + (2E,6E)-farnesyl diphosphate + H2O = Fe(II)-heme o + diphosphate. It functions in the pathway porphyrin-containing compound metabolism; heme O biosynthesis; heme O from protoheme: step 1/1. Its function is as follows. Converts heme B (protoheme IX) to heme O by substitution of the vinyl group on carbon 2 of heme B porphyrin ring with a hydroxyethyl farnesyl side group. The protein is Protoheme IX farnesyltransferase of Listeria monocytogenes serovar 1/2a (strain ATCC BAA-679 / EGD-e).